Here is a 241-residue protein sequence, read N- to C-terminus: Proteasome subunit beta type-1 (241 aa).

Residue Met-1 is modified to N-acetylmethionine. Residues 1–28 (MLSSTAMYSAPGRDLGMEPHRAAGPLQL) constitute a propeptide that is removed on maturation. Ser-58 carries O-linked (GlcNAc) serine glycosylation. Phosphoserine occurs at positions 62 and 68. Tyr-150 bears the Phosphotyrosine mark. Ser-162 bears the Phosphoserine mark. Lys-204 is modified (N6-acetyllysine). An O-linked (GlcNAc) serine glycan is attached at Ser-209.

Belongs to the peptidase T1B family. In terms of assembly, the 26S proteasome consists of a 20S proteasome core and two 19S regulatory subunits. The 20S proteasome core is a barrel-shaped complex made of 28 subunits that are arranged in four stacked rings. The two outer rings are each formed by seven alpha subunits, and the two inner rings are formed by seven beta subunits. The proteolytic activity is exerted by three beta-subunits PSMB5, PSMB6 and PSMB7. Interacts with SERPINB2. Interacts with RFPL4A. (Microbial infection) Interacts with HIV-1 protein Tat.

Its subcellular location is the cytoplasm. It localises to the nucleus. Functionally, non-catalytic component of the 20S core proteasome complex involved in the proteolytic degradation of most intracellular proteins. This complex plays numerous essential roles within the cell by associating with different regulatory particles. Associated with two 19S regulatory particles, forms the 26S proteasome and thus participates in the ATP-dependent degradation of ubiquitinated proteins. The 26S proteasome plays a key role in the maintenance of protein homeostasis by removing misfolded or damaged proteins that could impair cellular functions, and by removing proteins whose functions are no longer required. Associated with the PA200 or PA28, the 20S proteasome mediates ubiquitin-independent protein degradation. This type of proteolysis is required in several pathways including spermatogenesis (20S-PA200 complex) or generation of a subset of MHC class I-presented antigenic peptides (20S-PA28 complex). The protein is Proteasome subunit beta type-1 of Homo sapiens (Human).